Reading from the N-terminus, the 718-residue chain is MAEFEKSISFDGRDIRLKVGLLAPQAGGSVLIESGDTAVLVTATRSAGREGIDFLPLTVDYEERLYAAGRIPGGIMRREGRPPEKTILTSRLIDRPLRPLFPSWLRDDLQIVALTMSMDEQVPPDVLAVTGASIATLIAKIPFNGPMAAVRVGLVGDDFIINPTYAEIEAGDLDLVVAGSPHGVIMVEAGANQLPERDIIEAIDFGYEAVRDLIKAQLDLVAELGLEIVQEAPPEVDQTLENYIRDRASDEIKKILAQFELTKPERDAALDVVKDNIATAIAELPEEDPIRLAATANSKALGNTFKDITKYFMRRQIVEDNVRVDGRKLDQVRPVSSQVGVLPKRVHGSGLFNRGLTQVLSACTLGTPGDAQNLNDDLQTDQSKRYLHHYNFPPFSVGETKPLRAPGRREIGHGALAERAILPVLPPKEQFPYVIRVVSEVLSSNGSTSMGSVCGSTLALMDAGVPILKPVSGAAMGLIKEGDEVRVLTDIQGIEDFLGDMDFKVAGTDAGITALQMDMKISGLSLEVIAQAIHQAKDARLHILDKMLQTIDTPRTETSPYAPRLLTIKIDPDMIGLVIGPGGKTIKGITEETGAKIDIEDDGTVTISAVDENKAKRARNIVQGMTRKLNEGDVYAGRVTRIIPIGAFVEFLPGKEGMIHISQLADYRVGKVEDEVAVGDEVIVKVREIDNKGRINLTRLGIHPDQAAAAREAAAVNR.

Mg(2+)-binding residues include aspartate 496 and aspartate 502. In terms of domain architecture, KH spans 563–622 (PRLLTIKIDPDMIGLVIGPGGKTIKGITEETGAKIDIEDDGTVTISAVDENKAKRARNIV). The region spanning 632–700 (GDVYAGRVTR…NKGRINLTRL (69 aa)) is the S1 motif domain.

Belongs to the polyribonucleotide nucleotidyltransferase family. The cofactor is Mg(2+).

The protein localises to the cytoplasm. The catalysed reaction is RNA(n+1) + phosphate = RNA(n) + a ribonucleoside 5'-diphosphate. In terms of biological role, involved in mRNA degradation. Catalyzes the phosphorolysis of single-stranded polyribonucleotides processively in the 3'- to 5'-direction. The polypeptide is Polyribonucleotide nucleotidyltransferase (Trichormus variabilis (strain ATCC 29413 / PCC 7937) (Anabaena variabilis)).